We begin with the raw amino-acid sequence, 413 residues long: Probable alpha-amylase 2 (413 aa).

Substrate contacts are provided by residues 74 to 75 (YL) and 191 to 196 (RFDFAR). The active-site Nucleophile is the aspartate 193. Catalysis depends on glutamate 218, which acts as the Proton donor. Residues tryptophan 220, serine 222, glutamine 239, aspartate 246, lysine 280, 286-288 (GWW), histidine 299, glutamine 305, lysine 386, and tryptophan 411 contribute to the substrate site.

The protein belongs to the glycosyl hydrolase 13 family. Ca(2+) serves as cofactor. Expressed in developing siliques.

It is found in the cytoplasm. It localises to the cytosol. It catalyses the reaction Endohydrolysis of (1-&gt;4)-alpha-D-glucosidic linkages in polysaccharides containing three or more (1-&gt;4)-alpha-linked D-glucose units.. Functionally, probable alpha-amylase that does not seem to be required for breakdown of transitory starch in leaves. In Arabidopsis thaliana (Mouse-ear cress), this protein is Probable alpha-amylase 2 (AMY2).